We begin with the raw amino-acid sequence, 380 residues long: Acyl-coenzyme A diphosphatase SCS3 (380 aa).

Topologically, residues 1–7 are cytoplasmic; the sequence is MSSKWFN. The helical transmembrane segment at 8–28 threads the bilayer; that stretch reads AIHLLVCPLTVLVGYLMNAYG. The Lumenal portion of the chain corresponds to 29-43; it reads YGAALQATLNKDGLV. A helical membrane pass occupies residues 44 to 64; that stretch reads NAMLVKKGWFWTSLVGWWCII. Topologically, residues 65 to 88 are cytoplasmic; that stretch reads RYRAVPGATGRDRRHIVQSFKRYA. Residues 89–109 traverse the membrane as a helical segment; that stretch reads ILTVWWYVFTQGIWFGVGPIM. Topologically, residues 110 to 233 are lumenal; the sequence is DLVFVYTGGH…GHWAGGHDPS (124 aa). The helical transmembrane segment at 234 to 254 threads the bilayer; the sequence is GHVFLATLMCMFLLGELRVFG. His235 is a catalytic residue. The Cytoplasmic segment spans residues 255–325; the sequence is RRALAHLYAQ…LTRCIACDHP (71 aa). Residues 326–346 traverse the membrane as a helical segment; sequence VIILLTLLVTWLWQLLLTAVA. The Lumenal segment spans residues 347–356; the sequence is SRFHTVREHM. His350 is a catalytic residue. A helical transmembrane segment spans residues 357–377; that stretch reads SGLLAAYIVTGLVYARDAAAL. Residues 378–380 lie on the Cytoplasmic side of the membrane; sequence RPV.

The protein belongs to the FIT family. Fungal FIT2B/SCS3 subfamily.

It localises to the endoplasmic reticulum membrane. The enzyme catalyses an acyl-CoA + H2O = an acyl-4'-phosphopantetheine + adenosine 3',5'-bisphosphate + 2 H(+). It carries out the reaction (9Z)-octadecenoyl-CoA + H2O = S-(9Z-octadecenoyl)-4'-phosphopantetheine + adenosine 3',5'-bisphosphate + 2 H(+). It catalyses the reaction (5Z,8Z,11Z,14Z)-eicosatetraenoyl-CoA + H2O = S-(5Z,8Z,11Z,14Z-eicosatetraenoyl)-4'-phosphopantetheine + adenosine 3',5'-bisphosphate + 2 H(+). The catalysed reaction is hexadecanoyl-CoA + H2O = S-hexadecanoyl-4'-phosphopantetheine + adenosine 3',5'-bisphosphate + 2 H(+). Functionally, fatty acyl-coenzyme A (CoA) diphosphatase that hydrolyzes fatty acyl-CoA to yield acyl-4'-phosphopantetheine and adenosine 3',5'-bisphosphate. Preferentially hydrolyzes unsaturated long-chain acyl-CoA substrates in the endoplasmic reticulum (ER) lumen. This catalytic activity is required for maintaining ER structure and for lipid droplets (LDs) biogenesis, which are lipid storage organelles involved in maintaining lipid and energy homeostasis. May directly bind to diacylglycerol (DAGs) and triacylglycerol, which is also important for LD biogenesis. May support directional budding of nacent LDs from the ER into the cytosol by reducing DAG levels at sites of LD formation. May play a role in the regulation of cell morphology and cytoskeletal organization. Involved in phospholipid biosynthesis. This chain is Acyl-coenzyme A diphosphatase SCS3, found in Saccharomyces cerevisiae (strain ATCC 204508 / S288c) (Baker's yeast).